Reading from the N-terminus, the 389-residue chain is Probable nitrate transporter NarT (389 aa).

12 consecutive transmembrane segments (helical) span residues 14-34 (TLSL…MPFI), 45-65 (ISII…PFGY), 69-89 (IVGA…PIFF), 97-117 (GMLM…SVGV), 139-159 (GNIG…IIGW), 161-181 (TTVR…FIFG), 211-231 (WYFI…NYLV), 246-266 (GVFI…GDKF), 268-288 (AVKV…ILGI), 294-314 (LFTV…GLIF), 331-351 (IVSM…TYVA), and 353-373 (LTGS…IALF).

Belongs to the major facilitator superfamily. Nitrate/nitrite porter (TC 2.A.1.8) family.

The protein resides in the cell membrane. Probably required for nitrate uptake under anoxic conditions. Also possibly involved in excretion of nitrite produced by the dissimilatory reduction of nitrate. The protein is Probable nitrate transporter NarT (narT) of Staphylococcus aureus (strain JH9).